The sequence spans 228 residues: General odorant-binding protein 71 (228 aa).

An N-terminal signal peptide occupies residues 1-20 (MCGAIVLLLLVGTSPAPVEG). The interval 50-131 (TMGEWGQRDR…GNSSSSSSST (82 aa)) is disordered. A compositionally biased stretch (basic and acidic residues) spans 55–72 (GQRDRNGEEQQMMRDYGR). Low complexity predominate over residues 83-99 (GGQTSGSSSSGSAGEHS). Gly residues predominate over residues 111–120 (AGQGGNGTRS). Residues 121–131 (GGNSSSSSSST) are compositionally biased toward low complexity. 2 cysteine pairs are disulfide-bonded: C138–C199 and C185–C208.

The protein belongs to the PBP/GOBP family.

It localises to the secreted. Functionally, present in the aqueous fluid surrounding olfactory sensory dendrites and are thought to aid in the capture and transport of hydrophobic odorants into and through this fluid. This is General odorant-binding protein 71 (Obp71) from Anopheles gambiae (African malaria mosquito).